We begin with the raw amino-acid sequence, 209 residues long: MASLLARPQQAVVRAAKPAAARPLRLVVRASAQKPQQQLAQLAKPALSAIVANALMAMPAAAEAGKIFDFNLTLPVMAGEFLLLMVFLEKTWFTPVGKVLDERDNLIRSKLGSVKDNTGDVDKLVLEAETILKSARSDVSAMINTKKAAKQSELDKTYNEAKAKITAEVESSIAGLEQESASMLKSLDAQVDKISAEVLKRVLPEGVRV.

Residues 1–62 (MASLLARPQQ…NALMAMPAAA (62 aa)) constitute a chloroplast transit peptide. Residues 67–87 (IFDFNLTLPVMAGEFLLLMVF) traverse the membrane as a helical segment.

The protein belongs to the ATPase B chain family. As to quaternary structure, F-type ATPases have 2 components, F(1) - the catalytic core - and F(0) - the membrane proton channel. F(1) has five subunits: alpha(3), beta(3), gamma(1), delta(1), epsilon(1). F(0) has four main subunits: a(1), b(1), b'(1) and c(10-14). The alpha and beta chains form an alternating ring which encloses part of the gamma chain. F(1) is attached to F(0) by a central stalk formed by the gamma and epsilon chains, while a peripheral stalk is formed by the delta, b and b' chains.

The protein localises to the plastid. It is found in the chloroplast thylakoid membrane. Its function is as follows. F(1)F(0) ATP synthase produces ATP from ADP in the presence of a proton or sodium gradient. F-type ATPases consist of two structural domains, F(1) containing the extramembraneous catalytic core and F(0) containing the membrane proton channel, linked together by a central stalk and a peripheral stalk. During catalysis, ATP synthesis in the catalytic domain of F(1) is coupled via a rotary mechanism of the central stalk subunits to proton translocation. In terms of biological role, component of the F(0) channel, it forms part of the peripheral stalk, linking F(1) to F(0). The b'-subunit is a diverged and duplicated form of b found in plants and photosynthetic bacteria. The polypeptide is ATP synthase subunit b', chloroplastic (Chlamydomonas reinhardtii (Chlamydomonas smithii)).